A 2192-amino-acid polypeptide reads, in one-letter code: BEACH domain-containing protein lvsE (2192 aa).

4 disordered regions span residues 948 to 969 (STSLSTSSITPPPPNSRNTSTG), 996 to 1065 (TTTT…DEPE), 1160 to 1303 (NESQ…NNLS), and 1343 to 1363 (DENGVDVSSPNSSSLSSSSSN). Residues 996 to 1049 (TTTTTTTTTTTTTTSTTSNTGNDSPLSIESPISSPVLIENTTNTTNTTTTNTTN) are compositionally biased toward low complexity. Residues 1171-1187 (NIDNLNPNTGLPYNKST) show a composition bias toward polar residues. The span at 1188–1231 (NNLSNVNNVNNNNNNNSNNINVSGNNTIGPSSSKSPLRNSRSMS) shows a compositional bias: low complexity. Residues 1232-1243 (IGSSATKSPSRQ) are compositionally biased toward polar residues. 2 stretches are compositionally biased toward low complexity: residues 1253–1303 (NNNS…NNLS) and 1350–1363 (SSPNSSSLSSSSSN). Residues 1366-1491 (IEEEKFIGSW…ESIQIFNKIV (126 aa)) enclose the BEACH-type PH domain. In terms of domain architecture, BEACH spans 1504-1795 (DHPSKIIKKS…QLFSKPHPIR (292 aa)). The segment covering 1823–1849 (GTINSSFSSTSTSTSTSSPPPSTLNSP) has biased composition (low complexity). A disordered region spans residues 1823–1851 (GTINSSFSSTSTSTSTSSPPPSTLNSPQG). WD repeat units lie at residues 1973-2012 (FHHDMVTCISLGSNGKHFATASSDTTILVWNDVDHLIKDS), 2022-2061 (SHDEPVHCLDINEEWDLIASGSMDKKLILHSLGKGHYQRS), and 2156-2192 (DSPAAIKTIELVAHEKYMLIGLNDGNLVIIPFDVKDL).

This is BEACH domain-containing protein lvsE (lvsE) from Dictyostelium discoideum (Social amoeba).